The following is a 769-amino-acid chain: Transferrin receptor protein 1 (769 aa).

Residues methionine 1–cysteine 70 lie on the Cytoplasmic side of the membrane. Positions methionine 1–cysteine 70 are mediates interaction with SH3BP4. A phosphoserine mark is found at serine 10 and serine 19. Position 20 is a phosphotyrosine (tyrosine 20). Residues tyrosine 20–phenylalanine 23 carry the Endocytosis signal motif. Threonine 21 bears the Phosphothreonine mark. Serine 24 carries the phosphoserine modification. The Stop-transfer sequence signature appears at lysine 61–arginine 64. Residue cysteine 70 is the site of S-palmitoyl cysteine attachment. The helical; Signal-anchor for type II membrane protein transmembrane segment at tyrosine 71–tyrosine 91 threads the bilayer. Topologically, residues cysteine 92–phenylalanine 769 are extracellular. Threonine 107 carries O-linked (GalNAc...) threonine glycosylation. The 91-residue stretch at serine 232–phenylalanine 322 folds into the PA domain. N-linked (GlcNAc...) asparagine glycosylation is found at asparagine 260 and asparagine 326. The segment at threonine 578–phenylalanine 769 is ligand-binding. The Cell attachment site motif lies at arginine 655–aspartate 657. 2 N-linked (GlcNAc...) asparagine glycosylation sites follow: asparagine 731 and asparagine 736.

The protein belongs to the peptidase M28 family. M28B subfamily. As to quaternary structure, homodimer; disulfide-linked. Binds one transferrin molecule per subunit. Interacts with SH3BP4. Homodimer; disulfide-linked. Binds one transferrin or HFE molecule per subunit. Binds the HLA class II histocompatibility antigen, DR1. Interacts with SH3BP3. Interacts with STEAP3; facilitates TFRC endocytosis in erythroid precursor cells. Post-translationally, stearoylated by ZDHHC6 which inhibits TFRC-mediated activation of the JNK pathway and promotes mitochondrial fragmentation. Stearoylation does not affect iron uptake. In terms of processing, N- and O-glycosylated, phosphorylated and palmitoylated.

The protein localises to the cell membrane. Its subcellular location is the melanosome. Cellular uptake of iron occurs via receptor-mediated endocytosis of ligand-occupied transferrin receptor into specialized endosomes. Endosomal acidification leads to iron release. The apotransferrin-receptor complex is then recycled to the cell surface with a return to neutral pH and the concomitant loss of affinity of apotransferrin for its receptor. Transferrin receptor is necessary for development of erythrocytes and the nervous system. Positively regulates T and B cell proliferation through iron uptake. Acts as a lipid sensor that regulates mitochondrial fusion by regulating activation of the JNK pathway. When dietary levels of stearate (C18:0) are low, promotes activation of the JNK pathway, resulting in HUWE1-mediated ubiquitination and subsequent degradation of the mitofusin MFN2 and inhibition of mitochondrial fusion. When dietary levels of stearate (C18:0) are high, TFRC stearoylation inhibits activation of the JNK pathway and thus degradation of the mitofusin MFN2. Mediates uptake of NICOL1 into fibroblasts where it may regulate extracellular matrix production. This Felis catus (Cat) protein is Transferrin receptor protein 1 (TFRC).